The primary structure comprises 149 residues: uncharacterized protein (149 aa).

To B.subtilis XkdN.

This is an uncharacterized protein from Bacillus subtilis (strain 168).